The following is a 278-amino-acid chain: Energy-coupling factor transporter ATP-binding protein EcfA1 (278 aa).

The 235-residue stretch at 5–239 folds into the ABC transporter domain; it reads IRVQHLNYTY…GMELLRLGLD (235 aa). Residue 39–46 coordinates ATP; it reads GHNGSGKS. The active-site Proton acceptor is the E165.

This sequence belongs to the ABC transporter superfamily. Energy-coupling factor EcfA family. In terms of assembly, forms a stable energy-coupling factor (ECF) transporter complex probably composed of 2 membrane-embedded substrate-binding proteins (S component), 2 ATP-binding proteins (A component) and 2 transmembrane proteins (T component). This complex interacts with a number of substrate-specific components, including FolT and ThiT for 5-formyltetrahydrofolate and thiamine respectively.

It is found in the cell membrane. In terms of biological role, ATP-binding (A) component of a common energy-coupling factor (ECF) ABC-transporter complex. Unlike classic ABC transporters this ECF transporter provides the energy necessary to transport a number of different substrates including 5-formyltetrahydrofolate and thiamine. Expression of the complex plus FolT or ThiT in Lactococcus lactis subsp. cremoris (strain NZ9000) allows 5-formyltetrahydrofolate or thiamine uptake respectively; 5-formyltetrahydrofolate or thiamine are not taken up in the absence of FolT/ThiT or the EcfA1A2T complex. Deenergized L.lactis subsp. cremoris (treated with 2-deoxyglucose) does not take up substrate. In Lacticaseibacillus paracasei (strain ATCC 334 / BCRC 17002 / CCUG 31169 / CIP 107868 / KCTC 3260 / NRRL B-441) (Lactobacillus paracasei), this protein is Energy-coupling factor transporter ATP-binding protein EcfA1.